The sequence spans 107 residues: Large ribosomal subunit protein eL21 (107 aa).

This sequence belongs to the eukaryotic ribosomal protein eL21 family.

The protein is Large ribosomal subunit protein eL21 (rpl21e) of Aeropyrum pernix (strain ATCC 700893 / DSM 11879 / JCM 9820 / NBRC 100138 / K1).